Consider the following 210-residue polypeptide: Probable nicotinate-nucleotide adenylyltransferase (210 aa).

It belongs to the NadD family.

It catalyses the reaction nicotinate beta-D-ribonucleotide + ATP + H(+) = deamido-NAD(+) + diphosphate. The protein operates within cofactor biosynthesis; NAD(+) biosynthesis; deamido-NAD(+) from nicotinate D-ribonucleotide: step 1/1. Functionally, catalyzes the reversible adenylation of nicotinate mononucleotide (NaMN) to nicotinic acid adenine dinucleotide (NaAD). This chain is Probable nicotinate-nucleotide adenylyltransferase, found in Vesicomyosocius okutanii subsp. Calyptogena okutanii (strain HA).